Reading from the N-terminus, the 129-residue chain is ALK and LTK ligand 1 (129 aa).

The N-terminal stretch at 1–27 is a signal peptide; sequence MRPLKPGAPLPALFLLALALSPHGAHG. The disordered stretch occupies residues 24–63; that stretch reads GAHGRPRGRRGARVTDKEPKPLLFLPAAGAGRTPSGSRSA. Residues 25 to 35 are compositionally biased toward basic residues; the sequence is AHGRPRGRRGA. Cystine bridges form between C90–C126 and C104–C113.

It belongs to the ALKAL family. Widely expressed with highest levels in thyroid and moderate levels in stomach, trachea, small intestine, prostate and brain.

It localises to the secreted. The protein localises to the cell membrane. Its function is as follows. Cytokine that acts as a physiological ligand for receptor tyrosine kinase LTK, leading to its activation. Monomeric ALKAL1 binds to LTK, leading to LTK homodimerization and activation. In contrast to ALKAL2, does not act as a potent physiological ligand for ALK. This Homo sapiens (Human) protein is ALK and LTK ligand 1.